The sequence spans 417 residues: UDP-N-acetylglucosamine 1-carboxyvinyltransferase (417 aa).

Position 22–23 (22–23) interacts with phosphoenolpyruvate; the sequence is KN. A UDP-N-acetyl-alpha-D-glucosamine-binding site is contributed by arginine 93. Cysteine 117 (proton donor) is an active-site residue. Position 117 is a 2-(S-cysteinyl)pyruvic acid O-phosphothioketal (cysteine 117). UDP-N-acetyl-alpha-D-glucosamine contacts are provided by residues 122 to 126, aspartate 305, and isoleucine 327; that span reads RPVDQ.

This sequence belongs to the EPSP synthase family. MurA subfamily.

It is found in the cytoplasm. It carries out the reaction phosphoenolpyruvate + UDP-N-acetyl-alpha-D-glucosamine = UDP-N-acetyl-3-O-(1-carboxyvinyl)-alpha-D-glucosamine + phosphate. It participates in cell wall biogenesis; peptidoglycan biosynthesis. Cell wall formation. Adds enolpyruvyl to UDP-N-acetylglucosamine. The protein is UDP-N-acetylglucosamine 1-carboxyvinyltransferase of Nitrosomonas eutropha (strain DSM 101675 / C91 / Nm57).